The chain runs to 718 residues: SANT and BTB domain regulator of class switch recombination (718 aa).

Residues 21-59 (DMILYPLIGIPQTINWETVARLVPGLTPKECVKRFDELK) form the SANT domain. Positions 147–255 (MVIHVCDEAK…QCIQYCHKNM (109 aa)) constitute a BTB domain. A compositionally biased stretch (acidic residues) spans 555–576 (SEEEEYTTGSEVTEDEVGDEEE). Disordered regions lie at residues 555 to 622 (SEEE…SPFV) and 690 to 718 (RASV…GRPA). Over residues 580–595 (KQRKKEKPKKFTKPPK) the composition is skewed to basic residues. Over residues 604–615 (QKKEKTLEKSTS) the composition is skewed to basic and acidic residues.

Belongs to the KIAA1841 family. As to quaternary structure, homodimer. Interacts (via the BTB domain) with HDAC1 and NCOR2.

Negatively regulates class switch recombination or isotype switching in splenic B-cells. The chain is SANT and BTB domain regulator of class switch recombination from Mus musculus (Mouse).